The following is a 595-amino-acid chain: 2-succinyl-5-enolpyruvyl-6-hydroxy-3-cyclohexene-1-carboxylate synthase (595 aa).

This sequence belongs to the TPP enzyme family. MenD subfamily. As to quaternary structure, homodimer. Mg(2+) is required as a cofactor. Requires Mn(2+) as cofactor. It depends on thiamine diphosphate as a cofactor.

It carries out the reaction isochorismate + 2-oxoglutarate + H(+) = 5-enolpyruvoyl-6-hydroxy-2-succinyl-cyclohex-3-ene-1-carboxylate + CO2. Its pathway is quinol/quinone metabolism; 1,4-dihydroxy-2-naphthoate biosynthesis; 1,4-dihydroxy-2-naphthoate from chorismate: step 2/7. It participates in cofactor biosynthesis; phylloquinone biosynthesis. Functionally, catalyzes the thiamine diphosphate-dependent decarboxylation of 2-oxoglutarate and the subsequent addition of the resulting succinic semialdehyde-thiamine pyrophosphate anion to isochorismate to yield 2-succinyl-5-enolpyruvyl-6-hydroxy-3-cyclohexene-1-carboxylate (SEPHCHC). The protein is 2-succinyl-5-enolpyruvyl-6-hydroxy-3-cyclohexene-1-carboxylate synthase of Synechocystis sp. (strain ATCC 27184 / PCC 6803 / Kazusa).